Here is a 53-residue protein sequence, read N- to C-terminus: Large ribosomal subunit protein bL32c (53 aa).

It belongs to the bacterial ribosomal protein bL32 family.

It is found in the plastid. It localises to the chloroplast. The sequence is that of Large ribosomal subunit protein bL32c (rpl32) from Guillardia theta (Cryptophyte).